Reading from the N-terminus, the 254-residue chain is GPI alpha-1,4-mannosyltransferase I, stabilizing subunit (254 aa).

The signal sequence occupies residues M1–A22. Residues D23–L226 lie on the Lumenal side of the membrane. N211 carries an N-linked (GlcNAc...) asparagine glycan. A helical transmembrane segment spans residues V227–F247. Residues K248–L254 lie on the Cytoplasmic side of the membrane.

This sequence belongs to the PIGX family. Part of the glycosylphosphatidylinositol-mannosyltransferase I complex that is composed of PIGM and PIGX. Interacts with PIGM; PIGX stabilizes PIGM.

It localises to the endoplasmic reticulum membrane. It participates in glycolipid biosynthesis; glycosylphosphatidylinositol-anchor biosynthesis. Functionally, stabilizing subunit of the glycosylphosphatidylinositol-mannosyltransferase I complex which catalyzes the transfer of the first mannose, via an alpha-1,4 bond from a dolichol-phosphate-mannose (Dol-P-Man) to the glucosaminyl acyl phosphatidylinositol (GlcN-(acyl)PI) intermediate to generate alpha-D-Man-(1-&gt;4)-alpha-D-GlcN-(1-&gt;6)-(1-radyl,2-acyl-sn-glycero-3-phospho)-2-acyl-inositol and participates in the sixth step of the glycosylphosphatidylinositol-anchor biosynthesis. Probably acts by stabilizing the mannosyltransferase PIGM. The chain is GPI alpha-1,4-mannosyltransferase I, stabilizing subunit from Mus musculus (Mouse).